We begin with the raw amino-acid sequence, 155 residues long: Regulatory protein RecX (155 aa).

The protein belongs to the RecX family.

It localises to the cytoplasm. Its function is as follows. Modulates RecA activity. The polypeptide is Regulatory protein RecX (Vibrio campbellii (strain ATCC BAA-1116)).